Consider the following 256-residue polypeptide: 4-hydroxy-tetrahydrodipicolinate reductase (256 aa).

Residues 12–17 (GINGRV), aspartate 39, 86–88 (GTT), and 110–113 (AANY) contribute to the NAD(+) site. The Proton donor/acceptor role is filled by histidine 144. Residue histidine 145 participates in (S)-2,3,4,5-tetrahydrodipicolinate binding. Lysine 148 (proton donor) is an active-site residue. (S)-2,3,4,5-tetrahydrodipicolinate is bound at residue 154–155 (GT).

Belongs to the DapB family.

The protein resides in the cytoplasm. The enzyme catalyses (S)-2,3,4,5-tetrahydrodipicolinate + NAD(+) + H2O = (2S,4S)-4-hydroxy-2,3,4,5-tetrahydrodipicolinate + NADH + H(+). It catalyses the reaction (S)-2,3,4,5-tetrahydrodipicolinate + NADP(+) + H2O = (2S,4S)-4-hydroxy-2,3,4,5-tetrahydrodipicolinate + NADPH + H(+). Its pathway is amino-acid biosynthesis; L-lysine biosynthesis via DAP pathway; (S)-tetrahydrodipicolinate from L-aspartate: step 4/4. Catalyzes the conversion of 4-hydroxy-tetrahydrodipicolinate (HTPA) to tetrahydrodipicolinate. This chain is 4-hydroxy-tetrahydrodipicolinate reductase, found in Gluconacetobacter diazotrophicus (strain ATCC 49037 / DSM 5601 / CCUG 37298 / CIP 103539 / LMG 7603 / PAl5).